The chain runs to 483 residues: Chromosomal replication initiator protein DnaA (483 aa).

The interval 1–71 (MKEFWQTCVS…EALAAEWYQR (71 aa)) is domain I, interacts with DnaA modulators. The interval 71–145 (RPVQVQFELP…DAANIVYERS (75 aa)) is domain II. The interval 146–362 (RLNTDLTFEN…GALRKVLAYA (217 aa)) is domain III, AAA+ region. The ATP site is built by Gly190, Gly192, Lys193, and Thr194. The tract at residues 363–483 (RFHGREALNV…LHVLEQTLKG (121 aa)) is domain IV, binds dsDNA.

Belongs to the DnaA family. In terms of assembly, oligomerizes as a right-handed, spiral filament on DNA at oriC.

The protein localises to the cytoplasm. Plays an essential role in the initiation and regulation of chromosomal replication. ATP-DnaA binds to the origin of replication (oriC) to initiate formation of the DNA replication initiation complex once per cell cycle. Binds the DnaA box (a 9 base pair repeat at the origin) and separates the double-stranded (ds)DNA. Forms a right-handed helical filament on oriC DNA; dsDNA binds to the exterior of the filament while single-stranded (ss)DNA is stabiized in the filament's interior. The ATP-DnaA-oriC complex binds and stabilizes one strand of the AT-rich DNA unwinding element (DUE), permitting loading of DNA polymerase. After initiation quickly degrades to an ADP-DnaA complex that is not apt for DNA replication. Binds acidic phospholipids. In Bordetella avium (strain 197N), this protein is Chromosomal replication initiator protein DnaA.